Here is a 209-residue protein sequence, read N- to C-terminus: Ribosome maturation factor RimM (209 aa).

Residues 1 to 28 (MARRPQRPAPSGRAGAGRGAAGAAPPGP) form a disordered region. The PRC barrel domain occupies 123–197 (EDEFFTADLV…RVTIAPPEDL (75 aa)).

This sequence belongs to the RimM family. Binds ribosomal protein uS19.

The protein resides in the cytoplasm. In terms of biological role, an accessory protein needed during the final step in the assembly of 30S ribosomal subunit, possibly for assembly of the head region. Essential for efficient processing of 16S rRNA. May be needed both before and after RbfA during the maturation of 16S rRNA. It has affinity for free ribosomal 30S subunits but not for 70S ribosomes. The protein is Ribosome maturation factor RimM of Methylobacterium sp. (strain 4-46).